The sequence spans 346 residues: tRNA N6-adenosine threonylcarbamoyltransferase (346 aa).

Residues H111 and H115 each contribute to the Fe cation site. Substrate-binding positions include 134–138 (LVSGG), D167, G180, and N279. D307 is a binding site for Fe cation.

This sequence belongs to the KAE1 / TsaD family. Requires Fe(2+) as cofactor.

Its subcellular location is the cytoplasm. The enzyme catalyses L-threonylcarbamoyladenylate + adenosine(37) in tRNA = N(6)-L-threonylcarbamoyladenosine(37) in tRNA + AMP + H(+). Required for the formation of a threonylcarbamoyl group on adenosine at position 37 (t(6)A37) in tRNAs that read codons beginning with adenine. Is involved in the transfer of the threonylcarbamoyl moiety of threonylcarbamoyl-AMP (TC-AMP) to the N6 group of A37, together with TsaE and TsaB. TsaD likely plays a direct catalytic role in this reaction. This chain is tRNA N6-adenosine threonylcarbamoyltransferase, found in Burkholderia pseudomallei (strain K96243).